Reading from the N-terminus, the 305-residue chain is Glycine--tRNA ligase alpha subunit (305 aa).

It belongs to the class-II aminoacyl-tRNA synthetase family. In terms of assembly, tetramer of two alpha and two beta subunits.

The protein resides in the cytoplasm. It catalyses the reaction tRNA(Gly) + glycine + ATP = glycyl-tRNA(Gly) + AMP + diphosphate. In Streptococcus pneumoniae serotype 4 (strain ATCC BAA-334 / TIGR4), this protein is Glycine--tRNA ligase alpha subunit.